A 341-amino-acid polypeptide reads, in one-letter code: Follistatin (341 aa).

The first 29 residues, 1 to 29 (MLNERIQPGMIFLLTVSLCHFMEYRAVQA), serve as a signal peptide directing secretion. The TB domain occupies 30-103 (GNCWLQQSKN…TCENVDCGPG (74 aa)). 8 disulfide bridges follow: cysteine 32-cysteine 55, cysteine 42-cysteine 88, cysteine 56-cysteine 91, cysteine 95-cysteine 106, cysteine 100-cysteine 116, cysteine 118-cysteine 150, cysteine 122-cysteine 143, and cysteine 132-cysteine 164. Asparagine 72 carries N-linked (GlcNAc...) asparagine glycosylation. The 24-residue stretch at 94–117 (TCENVDCGPGKKCKMNKKNKPRCV) folds into the Follistatin-like 1 domain. 3 consecutive Kazal-like domains span residues 100–166 (CGPG…KCKK), 186–241 (NAYC…KCIK), and 264–318 (RGRC…SCNS). Asparagine 124 carries an N-linked (GlcNAc...) asparagine glycan. The region spanning 167–190 (TCRDVLCPGSSSCVVDQTNNAYCV) is the Follistatin-like 2 domain. Cystine bridges form between cysteine 192-cysteine 225, cysteine 196-cysteine 218, and cysteine 207-cysteine 239. Residues 244 to 268 (SCEDIQCSAGKKCLWDSRVGRGRCA) form the Follistatin-like 3 domain. 3 disulfides stabilise this stretch: cysteine 270/cysteine 302, cysteine 274/cysteine 295, and cysteine 284/cysteine 316. Asparagine 288 carries N-linked (GlcNAc...) asparagine glycosylation. The segment covering 321–333 (EDTEEEEEEEEPD) has biased composition (acidic residues). Positions 321 to 341 (EDTEEEEEEEEPDYSFVISSW) are disordered.

Monomer. Spemann organizer and notochord.

The protein resides in the secreted. Binds directly to activin and functions as an activin antagonist which plays a role in neural induction. The short isoform is a more potent inhibitor of activin than the long isoform. Specific inhibitor of the biosynthesis and secretion of pituitary follicle stimulating hormone (FSH). This Xenopus laevis (African clawed frog) protein is Follistatin (fst).